Consider the following 457-residue polypeptide: Polygalacturonase-2 (457 aa).

The first 24 residues, 1–24 (MVIQRNSILLLIIIFASSISTCRS), serve as a signal peptide directing secretion. The propeptide occupies 25 to 71 (NVIDDNLFKQVYDNILEQEFAHDFQAYLSYLSKNIESNNNIDKVDKN). 2 N-linked (GlcNAc...) asparagine glycosylation sites follow: Asn-189 and Asn-240. PbH1 repeat units follow at residues 228 to 255 (SCTN…HVSN) and 256 to 277 (TQYI…SIVS). Asp-270 acts as the Proton donor in catalysis. The N-linked (GlcNAc...) asparagine glycan is linked to Asn-286. His-293 is a catalytic residue. 2 PbH1 repeats span residues 309–330 (VSNV…RIKT) and 338–359 (ASNI…IIDQ). N-linked (GlcNAc...) asparagine glycosylation is present at Asn-311. A propeptide spanning residues 445 to 457 (LEISEDEALLYNY) is cleaved from the precursor.

Belongs to the glycosyl hydrolase 28 family. In terms of assembly, monomer PG2 (isoenzymes PG2A and PG2B). Also forms heterodimers called polygalacturonase 1 (PG1) with the beta subunit GP1. Post-translationally, N-glycosylated. PG2B isozyme has a greater degree of glycosylation than PG2A. Expressed only in ripening fruits (at protein level).

It localises to the secreted. The protein localises to the extracellular space. It is found in the apoplast. Its subcellular location is the cell wall. It carries out the reaction (1,4-alpha-D-galacturonosyl)n+m + H2O = (1,4-alpha-D-galacturonosyl)n + (1,4-alpha-D-galacturonosyl)m.. Functionally, catalytic subunit of the polygalacturonase isozyme 1 and 2 (PG1 and PG2). Acts in concert with the pectinesterase, in the ripening process. Is involved in cell wall metabolism, specifically in polyuronide degradation. The depolymerization and solubilization of cell wall polyuronides mediated by PG2 during ripening seems to be limited by the beta subunit GP1, probably by recruiting PG2 to form PG1. This chain is Polygalacturonase-2 (PG2), found in Solanum lycopersicum (Tomato).